A 371-amino-acid chain; its full sequence is DNA replication and repair protein RecF (371 aa).

30 to 37 (GQNGMGKT) contacts ATP.

Belongs to the RecF family.

It localises to the cytoplasm. Its function is as follows. The RecF protein is involved in DNA metabolism; it is required for DNA replication and normal SOS inducibility. RecF binds preferentially to single-stranded, linear DNA. It also seems to bind ATP. This chain is DNA replication and repair protein RecF, found in Phocaeicola vulgatus (strain ATCC 8482 / DSM 1447 / JCM 5826 / CCUG 4940 / NBRC 14291 / NCTC 11154) (Bacteroides vulgatus).